The primary structure comprises 235 residues: Geranylgeranylglyceryl phosphate synthase (235 aa).

A sn-glycerol 1-phosphate-binding site is contributed by Lys-13. Mg(2+) contacts are provided by Asp-15 and Thr-42. Residues 162–167 (YVEYSG), Gly-192, and 212–213 (GD) contribute to the sn-glycerol 1-phosphate site.

Belongs to the GGGP/HepGP synthase family. Group I subfamily. Requires Mg(2+) as cofactor.

It localises to the cytoplasm. It catalyses the reaction sn-glycerol 1-phosphate + (2E,6E,10E)-geranylgeranyl diphosphate = sn-3-O-(geranylgeranyl)glycerol 1-phosphate + diphosphate. Its pathway is membrane lipid metabolism; glycerophospholipid metabolism. In terms of biological role, prenyltransferase that catalyzes the transfer of the geranylgeranyl moiety of geranylgeranyl diphosphate (GGPP) to the C3 hydroxyl of sn-glycerol-1-phosphate (G1P). This reaction is the first ether-bond-formation step in the biosynthesis of archaeal membrane lipids. The sequence is that of Geranylgeranylglyceryl phosphate synthase from Natronomonas pharaonis (strain ATCC 35678 / DSM 2160 / CIP 103997 / JCM 8858 / NBRC 14720 / NCIMB 2260 / Gabara) (Halobacterium pharaonis).